Here is a 377-residue protein sequence, read N- to C-terminus: Porphobilinogen deaminase (377 aa).

An S-(dipyrrolylmethanemethyl)cysteine modification is found at C269.

It belongs to the HMBS family. Monomer. Requires dipyrromethane as cofactor.

The catalysed reaction is 4 porphobilinogen + H2O = hydroxymethylbilane + 4 NH4(+). It functions in the pathway porphyrin-containing compound metabolism; protoporphyrin-IX biosynthesis; coproporphyrinogen-III from 5-aminolevulinate: step 2/4. Tetrapolymerization of the monopyrrole PBG into the hydroxymethylbilane pre-uroporphyrinogen in several discrete steps. This is Porphobilinogen deaminase from Micrococcus luteus (strain ATCC 4698 / DSM 20030 / JCM 1464 / CCM 169 / CCUG 5858 / IAM 1056 / NBRC 3333 / NCIMB 9278 / NCTC 2665 / VKM Ac-2230) (Micrococcus lysodeikticus).